A 215-amino-acid polypeptide reads, in one-letter code: NAD(P)H-quinone oxidoreductase subunit I (215 aa).

2 4Fe-4S ferredoxin-type domains span residues G55–V84 and R95–E124. C64, C67, C70, C74, C104, C107, C110, and C114 together coordinate [4Fe-4S] cluster. Positions M169–R180 are enriched in basic and acidic residues. The disordered stretch occupies residues M169–A215.

This sequence belongs to the complex I 23 kDa subunit family. As to quaternary structure, NDH-1 is composed of at least 11 different subunits. It depends on [4Fe-4S] cluster as a cofactor.

It localises to the cellular thylakoid membrane. It carries out the reaction a plastoquinone + NADH + (n+1) H(+)(in) = a plastoquinol + NAD(+) + n H(+)(out). It catalyses the reaction a plastoquinone + NADPH + (n+1) H(+)(in) = a plastoquinol + NADP(+) + n H(+)(out). In terms of biological role, NDH-1 shuttles electrons from an unknown electron donor, via FMN and iron-sulfur (Fe-S) centers, to quinones in the respiratory and/or the photosynthetic chain. The immediate electron acceptor for the enzyme in this species is believed to be plastoquinone. Couples the redox reaction to proton translocation, and thus conserves the redox energy in a proton gradient. The polypeptide is NAD(P)H-quinone oxidoreductase subunit I (Synechococcus sp. (strain CC9605)).